The following is a 138-amino-acid chain: Large ribosomal subunit protein mL54 (138 aa).

The transit peptide at 1-16 (MAARRLFGATGSWARW) directs the protein to the mitochondrion.

This sequence belongs to the mitochondrion-specific ribosomal protein mL54 family. Component of the mitochondrial ribosome large subunit (39S) which comprises a 16S rRNA and about 50 distinct proteins.

It is found in the mitochondrion. This is Large ribosomal subunit protein mL54 (MRPL54) from Bos taurus (Bovine).